Reading from the N-terminus, the 450-residue chain is Mitochondrial distribution and morphology protein 10 (450 aa).

The protein belongs to the MDM10 family. Component of the ER-mitochondria encounter structure (ERMES) or MDM complex, composed of MMM1, MDM10, MDM12 and MDM34. Associates with the mitochondrial outer membrane sorting assembly machinery SAM(core) complex.

It is found in the mitochondrion outer membrane. In terms of biological role, component of the ERMES/MDM complex, which serves as a molecular tether to connect the endoplasmic reticulum and mitochondria. Components of this complex are involved in the control of mitochondrial shape and protein biogenesis and may function in phospholipid exchange. MDM10 is involved in the late assembly steps of the general translocase of the mitochondrial outer membrane (TOM complex). Functions in the TOM40-specific route of the assembly of outer membrane beta-barrel proteins, including the association of TOM40 with the receptor TOM22 and small TOM proteins. Can associate with the SAM(core) complex as well as the MDM12-MMM1 complex, both involved in late steps of the major beta-barrel assembly pathway, that is responsible for biogenesis of all outer membrane beta-barrel proteins. May act as a switch that shuttles between both complexes and channels precursor proteins into the TOM40-specific pathway. Plays a role in mitochondrial morphology and in the inheritance of mitochondria. The sequence is that of Mitochondrial distribution and morphology protein 10 from Paracoccidioides lutzii (strain ATCC MYA-826 / Pb01) (Paracoccidioides brasiliensis).